A 634-amino-acid polypeptide reads, in one-letter code: Threonine--tRNA ligase (634 aa).

One can recognise a TGS domain in the interval 1-61 (MFEVKLKDGS…DSDCEVQFVK (61 aa)). Positions 242-532 (DHRKIGKEMG…LIEHYAGKFP (291 aa)) are catalytic. The Zn(2+) site is built by Cys333, His384, and His509.

The protein belongs to the class-II aminoacyl-tRNA synthetase family. Homodimer. Zn(2+) is required as a cofactor.

Its subcellular location is the cytoplasm. The enzyme catalyses tRNA(Thr) + L-threonine + ATP = L-threonyl-tRNA(Thr) + AMP + diphosphate + H(+). In terms of biological role, catalyzes the attachment of threonine to tRNA(Thr) in a two-step reaction: L-threonine is first activated by ATP to form Thr-AMP and then transferred to the acceptor end of tRNA(Thr). Also edits incorrectly charged L-seryl-tRNA(Thr). This chain is Threonine--tRNA ligase, found in Finegoldia magna (strain ATCC 29328 / DSM 20472 / WAL 2508) (Peptostreptococcus magnus).